Here is a 459-residue protein sequence, read N- to C-terminus: Phosphomethylpyrimidine synthase (459 aa).

Substrate is bound by residues asparagine 80, methionine 109, tyrosine 139, histidine 175, 195 to 197, 236 to 239, and glutamate 275; these read SRG and DSLR. Histidine 279 serves as a coordination point for Zn(2+). Tyrosine 302 provides a ligand contact to substrate. Histidine 343 contributes to the Zn(2+) binding site. [4Fe-4S] cluster is bound by residues cysteine 423, cysteine 426, and cysteine 431.

Belongs to the ThiC family. Requires [4Fe-4S] cluster as cofactor.

The catalysed reaction is 5-amino-1-(5-phospho-beta-D-ribosyl)imidazole + S-adenosyl-L-methionine = 4-amino-2-methyl-5-(phosphooxymethyl)pyrimidine + CO + 5'-deoxyadenosine + formate + L-methionine + 3 H(+). It participates in cofactor biosynthesis; thiamine diphosphate biosynthesis. Catalyzes the synthesis of the hydroxymethylpyrimidine phosphate (HMP-P) moiety of thiamine from aminoimidazole ribotide (AIR) in a radical S-adenosyl-L-methionine (SAM)-dependent reaction. The protein is Phosphomethylpyrimidine synthase of Gloeothece citriformis (strain PCC 7424) (Cyanothece sp. (strain PCC 7424)).